We begin with the raw amino-acid sequence, 784 residues long: MKKRIPTLLATMIATALYSQQGLAADLASQCMLGVPSYDRPLVQGDTNDLPVTINADHAKGDYPDDAVFTGSVDIMQGNSRLQADEVQLHQKEAPGQPEPVRTVDALGNVHYDDNQVILKGPKGWANLNTKDTNVWEGDYQMVGRQGRGKADLMKQRGENRYTILDNGSFTSCLPGSDTWSVVGSEIIHDREEQVAEIWNARFKVGPVPIFYSPYLQLPVGDKRRSGFLIPNAKYTTTNYFEFYLPYYWNIAPNMDATITPHYMHRRGNIMWENEFRYLSQAGAGLMELDYLPSDKVYKDEHPNDDSSRRWLFYWNHSGVMDQVWRFNVDYTKVSDPSYFNDFDNKYGSSTDGYATQKFSVGYAVQNFNATVSTKQFQVFSEQNTSSYSAEPQLDVNYYQNDVGPFDTRIYGQAVHFVNTRDDMPEATRVHLEPTINLPLSNNWGSINTEAKLLATHYQQTNLDWYNSRNTTKLAESANRVMPQFKVDGRMVFERDMEMLAPGYTQTLEPRAQYLYVPYRDQSKIYNYDSSLLQSDYSGLFRDRTYGGLDRIASANQVTTGVTSRIYDDAAVERFNISVGQIYYFTESRTGDDNITWENDDKTGSLVWAGDTYWRISDRWGLRGGIQYDTRLDNVATSNSSIEYRRDEDRLVQLNYRYASPEYIQATLPKYYSTAEQYKNGISQVGAVASWPIADRWSIVGAYYYDTNANKQADSMLGVQYSSCCYAIRVGYERKLNGWDNDKQHAVYDNAIGFNIELRGLSSNYGLGTQEMLRSNILPYQNTL.

An N-terminal signal peptide occupies residues 1–24 (MKKRIPTLLATMIATALYSQQGLA). 2 cysteine pairs are disulfide-bonded: Cys-31-Cys-724 and Cys-173-Cys-725.

The protein belongs to the LptD family. As to quaternary structure, component of the lipopolysaccharide transport and assembly complex. Interacts with LptE and LptA. Post-translationally, contains two intramolecular disulfide bonds.

The protein localises to the cell outer membrane. Together with LptE, is involved in the assembly of lipopolysaccharide (LPS) at the surface of the outer membrane. This chain is LPS-assembly protein LptD, found in Escherichia coli O1:K1 / APEC.